The chain runs to 365 residues: 1-deoxy-D-xylulose 5-phosphate reductoisomerase (365 aa).

Residues threonine 7, glycine 8, serine 9, isoleucine 10, alanine 31, lysine 32, asparagine 33, and asparagine 114 each coordinate NADPH. Lysine 115 contributes to the 1-deoxy-D-xylulose 5-phosphate binding site. Residue glutamate 116 participates in NADPH binding. A Mn(2+)-binding site is contributed by aspartate 134. 1-deoxy-D-xylulose 5-phosphate-binding residues include serine 135, glutamate 136, serine 158, and histidine 181. Mn(2+) is bound at residue glutamate 136. Position 187 (glycine 187) interacts with NADPH. 1-deoxy-D-xylulose 5-phosphate is bound by residues serine 194, asparagine 199, lysine 200, and glutamate 203. Mn(2+) is bound at residue glutamate 203.

It belongs to the DXR family. It depends on Mg(2+) as a cofactor. Mn(2+) is required as a cofactor.

It carries out the reaction 2-C-methyl-D-erythritol 4-phosphate + NADP(+) = 1-deoxy-D-xylulose 5-phosphate + NADPH + H(+). It participates in isoprenoid biosynthesis; isopentenyl diphosphate biosynthesis via DXP pathway; isopentenyl diphosphate from 1-deoxy-D-xylulose 5-phosphate: step 1/6. Catalyzes the NADPH-dependent rearrangement and reduction of 1-deoxy-D-xylulose-5-phosphate (DXP) to 2-C-methyl-D-erythritol 4-phosphate (MEP). This Campylobacter curvus (strain 525.92) protein is 1-deoxy-D-xylulose 5-phosphate reductoisomerase.